A 516-amino-acid polypeptide reads, in one-letter code: L-amino-acid oxidase (516 aa).

The signal sequence occupies residues Met-1 to Cys-18. A disulfide bond links Cys-28 and Cys-191. FAD contacts are provided by residues Met-61–Ala-62, Glu-81–Ala-82, Arg-89, and Gly-105–Arg-108. Arg-108 contacts substrate. N-linked (GlcNAc...) (complex) asparagine glycosylation occurs at Asn-190. His-241 contacts substrate. Residue Val-279 participates in FAD binding. A disulfide bridge connects residues Cys-349 and Cys-430. An N-linked (GlcNAc...) (complex) asparagine glycan is attached at Asn-379. Substrate is bound at residue Tyr-390. FAD contacts are provided by residues Glu-475 and Gly-482–Thr-487. A substrate-binding site is contributed by Gly-482–Trp-483.

Homodimer; non-covalently linked. Requires FAD as cofactor. N-glycosylated at Asn-190 and Asn-379 with bis-sialylated, biantennary, core-fucosylated dodecasaccharide (composed of N-acetylglucosamine, fucose, mannose, galactose, and sialic acid residues). As to expression, expressed by the venom gland.

It localises to the secreted. It catalyses the reaction an L-alpha-amino acid + O2 + H2O = a 2-oxocarboxylate + H2O2 + NH4(+). The catalysed reaction is L-leucine + O2 + H2O = 4-methyl-2-oxopentanoate + H2O2 + NH4(+). The enzyme catalyses L-phenylalanine + O2 + H2O = 3-phenylpyruvate + H2O2 + NH4(+). It carries out the reaction L-tryptophan + O2 + H2O = indole-3-pyruvate + H2O2 + NH4(+). It catalyses the reaction L-methionine + O2 + H2O = 4-methylsulfanyl-2-oxobutanoate + H2O2 + NH4(+). The catalysed reaction is L-isoleucine + O2 + H2O = (S)-3-methyl-2-oxopentanoate + H2O2 + NH4(+). The enzyme catalyses L-arginine + O2 + H2O = 5-guanidino-2-oxopentanoate + H2O2 + NH4(+). It carries out the reaction L-aspartate + O2 + H2O = oxaloacetate + H2O2 + NH4(+). It catalyses the reaction L-histidine + O2 + H2O = 3-(imidazol-5-yl)pyruvate + H2O2 + NH4(+). The catalysed reaction is L-2-aminohexanoate + O2 + H2O = 2-oxohexanoate + H2O2 + NH4(+). The enzyme catalyses L-2-aminopentanoate + O2 + H2O = 2-oxopentanoate + H2O2 + NH4(+). Functionally, catalyzes an oxidative deamination of predominantly hydrophobic and aromatic L-amino acids, thus producing hydrogen peroxide that may contribute to the diverse toxic effects of this enzyme. Shows high affinity for L-Phe, L-Trp, L-Met, L-Leu, and L-Ile, moderate affinity for L-Arg, L-Asp, and L-His, and very low affinity for L-Gln, L-Lys, and L-Ala. Also shows high activity on L-norleucine (L-2-aminohexanoate), and L-norvaline (L-2-aminopentanoate) and a weak activity on L-ornithine and L-aminobutyric acid. Also exhibits diverse biological activities, such as hemorrhage, hemolysis, edema, apoptosis of vascular endothelial cells or tumor cell lines, and antiparasitic activities, as well as regulation of platelet aggregation. Its effect on platelets is controversial, since it either induces aggregation or inhibits agonist-induced aggregation. These different effects are probably due to different experimental conditions. A possible explanation of high efficacy it that LAAO may bind to target cells through its sialylated glycan moiety that would bind to sialic acid-binding lectins (siglec) on target cells. This interaction may result in production of locally high concentrations of hydrogen peroxide in or near the binding interface, leading, in turn to oxidative damage of the siglec or another adjacent cell structural elements. This Calloselasma rhodostoma (Malayan pit viper) protein is L-amino-acid oxidase.